The chain runs to 80 residues: uncharacterized protein (80 aa).

4Fe-4S ferredoxin-type domains follow at residues 21–49 (KIIEIDYNKCKNCLSCYRVCKNNVFAIKN) and 50–80 (NRVVVKNENNCTKCGECLKVCRYGAIILYDA). [4Fe-4S] cluster contacts are provided by Cys-30, Cys-33, Cys-36, Cys-40, Cys-60, Cys-63, Cys-66, and Cys-70.

[4Fe-4S] cluster serves as cofactor.

This is an uncharacterized protein from Methanocaldococcus jannaschii (strain ATCC 43067 / DSM 2661 / JAL-1 / JCM 10045 / NBRC 100440) (Methanococcus jannaschii).